We begin with the raw amino-acid sequence, 176 residues long: Protein Dr1 (176 aa).

Alanine 2 is modified (N-acetylalanine). One can recognise a Histone-fold domain in the interval 12-75; that stretch reads TIPRAAINKM…ISPEHVIQAL (64 aa). The short motif at 100 to 103 is the Nuclear localization signal element; the sequence is KRRK. A phosphoserine mark is found at serine 105, serine 106, serine 166, and serine 167. A compositionally biased stretch (low complexity) spans 152–167; that stretch reads QLAAASASASNQAGSS. The segment at 152–176 is disordered; that stretch reads QLAAASASASNQAGSSQDEEDDDDI.

Belongs to the NC2 beta/DR1 family. Heterodimer with DRAP1. DR1 exists in solution as a homotetramer that dissociates during interaction with TBP and then, after complexing with TBP, reassociates at a slow rate, to reconstitute the tetramer. Interacts with NFIL3. Component of the ADA2A-containing complex (ATAC), composed of KAT14, KAT2A, TADA2L, TADA3L, ZZ3, MBIP, WDR5, YEATS2, CCDC101 and DR1. Phosphorylation regulates its interaction with TBP. Not phosphorylated when bound to DRAP1.

The protein localises to the nucleus. In terms of biological role, the association of the DR1/DRAP1 heterodimer with TBP results in a functional repression of both activated and basal transcription of class II genes. This interaction precludes the formation of a transcription-competent complex by inhibiting the association of TFIIA and/or TFIIB with TBP. Can bind to DNA on its own. Component of the ATAC complex, a complex with histone acetyltransferase activity on histones H3 and H4. The chain is Protein Dr1 (DR1) from Homo sapiens (Human).